The following is a 236-amino-acid chain: Probable sulfate/thiosulfate import ATP-binding protein CysA (236 aa).

The ABC transporter domain maps to 3 to 233 (ILIENISKRF…PTNTFVTNFL (231 aa)). 35–42 (GPSGSGKS) is an ATP binding site.

The protein belongs to the ABC transporter superfamily. Sulfate/tungstate importer (TC 3.A.1.6) family.

The protein resides in the plastid. The protein localises to the chloroplast. The enzyme catalyses sulfate(out) + ATP + H2O = sulfate(in) + ADP + phosphate + H(+). The catalysed reaction is thiosulfate(out) + ATP + H2O = thiosulfate(in) + ADP + phosphate + H(+). In terms of biological role, part of the ABC transporter complex involved in sulfate/thiosulfate import. Responsible for energy coupling to the transport system. This Chlorella vulgaris (Green alga) protein is Probable sulfate/thiosulfate import ATP-binding protein CysA.